A 552-amino-acid chain; its full sequence is 4-coumarate--CoA ligase-like 4 (552 aa).

Residues 182 to 205 (ISATTPDPARRKDRVTQDDPATLL) are disordered. Residues 189–198 (PARRKDRVTQ) are compositionally biased toward basic and acidic residues. 6 residues coordinate ATP: serine 207, serine 208, glycine 209, threonine 210, threonine 211, and lysine 215. Residue tyrosine 256 coordinates (E)-4-coumaroyl-AMP. Lysine 277 lines the CoA pocket. An SBD1 region spans residues 279-346 (ELPEMLRSIN…EKYPQVEILQ (68 aa)). The (E)-4-coumaroyl-AMP site is built by glycine 324, glutamine 346, glycine 347, and threonine 351. The ATP site is built by glutamine 346, glycine 347, threonine 351, aspartate 432, and arginine 447. Positions 347–411 (GYGLTESTAI…IRGPYVMKGY (65 aa)) are SBD2. Positions 449 and 453 each coordinate (E)-4-coumaroyl-AMP. Positions 455 and 456 each coordinate CoA. Residue lysine 538 participates in ATP binding.

It belongs to the ATP-dependent AMP-binding enzyme family. It depends on Mg(2+) as a cofactor.

The enzyme catalyses (E)-4-coumarate + ATP + CoA = (E)-4-coumaroyl-CoA + AMP + diphosphate. It carries out the reaction (E)-4-coumarate + ATP + H(+) = (E)-4-coumaroyl-AMP + diphosphate. The catalysed reaction is (E)-4-coumaroyl-AMP + CoA = (E)-4-coumaroyl-CoA + AMP + H(+). Its function is as follows. Carboxylate--CoA ligase that may use 4-coumarate as substrate. Follows a two-step reaction mechanism, wherein the carboxylate substrate first undergoes adenylation by ATP, followed by a thioesterification in the presence of CoA to yield the final CoA thioester. This is 4-coumarate--CoA ligase-like 4 (4CLL4) from Oryza sativa subsp. japonica (Rice).